The following is a 507-amino-acid chain: Alpha-amylase 2 (507 aa).

The signal sequence occupies residues 1-20 (MKFATILSTTALALSSLVAS). Cysteines 62 and 70 form a disulfide. Trp-115 provides a ligand contact to substrate. Ca(2+) is bound at residue Asn-153. His-154 lines the substrate pocket. An intrachain disulfide couples Cys-182 to Cys-196. Glu-194 and Asp-207 together coordinate Ca(2+). The N-linked (GlcNAc...) asparagine glycan is linked to Asn-229. Arg-236 is a binding site for substrate. Asp-238, His-242, and Glu-262 together coordinate Ca(2+). Asp-238 serves as the catalytic Nucleophile. 241 to 242 (KH) contacts substrate. Glu-262 (proton donor) is an active-site residue. Residue Gly-266 coordinates substrate. Cys-272 and Cys-315 are disulfide-bonded. Substrate-binding residues include Asp-329 and Arg-376. A disulfide bridge links Cys-470 with Cys-505.

This sequence belongs to the glycosyl hydrolase 13 family. Ca(2+) is required as a cofactor.

The catalysed reaction is Endohydrolysis of (1-&gt;4)-alpha-D-glucosidic linkages in polysaccharides containing three or more (1-&gt;4)-alpha-linked D-glucose units.. The protein is Alpha-amylase 2 (SWA2) of Schwanniomyces occidentalis (Yeast).